A 279-amino-acid chain; its full sequence is Ribosomal RNA small subunit methyltransferase A (279 aa).

S-adenosyl-L-methionine contacts are provided by leucine 42, glycine 67, glutamate 88, aspartate 113, and asparagine 129.

It belongs to the class I-like SAM-binding methyltransferase superfamily. rRNA adenine N(6)-methyltransferase family. RsmA subfamily.

The protein localises to the cytoplasm. It carries out the reaction adenosine(1518)/adenosine(1519) in 16S rRNA + 4 S-adenosyl-L-methionine = N(6)-dimethyladenosine(1518)/N(6)-dimethyladenosine(1519) in 16S rRNA + 4 S-adenosyl-L-homocysteine + 4 H(+). Functionally, specifically dimethylates two adjacent adenosines (A1518 and A1519) in the loop of a conserved hairpin near the 3'-end of 16S rRNA in the 30S particle. May play a critical role in biogenesis of 30S subunits. The polypeptide is Ribosomal RNA small subunit methyltransferase A (Thermotoga maritima (strain ATCC 43589 / DSM 3109 / JCM 10099 / NBRC 100826 / MSB8)).